A 214-amino-acid chain; its full sequence is MQEIIIQVMNQFGYFGVAFLIMIENIFPPIPSEVILTFGGFMTTYSELGIIGMIIAATIGSVLGALILYFVGRLLSVERLEKLVSGRLGKVLRLKPEDITKAEKWFLKRGYATIFFCRFIPLIRSLISIPAGSAKMKLPSFLILTTLGTLIWNIVLVCLGAALGDNWEMIAGILDSYSSVVVVILGIIFILAILIFVKKRFFPKNKNYSSDTEK.

3 consecutive transmembrane segments (helical) span residues 48–68, 141–161, and 177–197; these read LGIIGMIIAATIGSVLGALIL, FLILTTLGTLIWNIVLVCLGA, and YSSVVVVILGIIFILAILIFV.

The protein belongs to the DedA family.

Its subcellular location is the cell membrane. This chain is Alkaline phosphatase-like protein (apl), found in Lactococcus lactis subsp. lactis (strain IL1403) (Streptococcus lactis).